The following is a 345-amino-acid chain: Phenylalanine--tRNA ligase alpha subunit (345 aa).

Residue Glu-266 coordinates Mg(2+).

It belongs to the class-II aminoacyl-tRNA synthetase family. Phe-tRNA synthetase alpha subunit type 1 subfamily. In terms of assembly, tetramer of two alpha and two beta subunits. The cofactor is Mg(2+).

It is found in the cytoplasm. It catalyses the reaction tRNA(Phe) + L-phenylalanine + ATP = L-phenylalanyl-tRNA(Phe) + AMP + diphosphate + H(+). The protein is Phenylalanine--tRNA ligase alpha subunit of Methylibium petroleiphilum (strain ATCC BAA-1232 / LMG 22953 / PM1).